The chain runs to 439 residues: Lipoyl synthase, mitochondrial (439 aa).

Residues 1–37 constitute a mitochondrion transit peptide; sequence MVASARGLRTLHSAHSSISALPASTVPRLQLAVSRCY. Residues Cys150, Cys155, Cys161, Cys181, Cys185, Cys188, and Ser396 each contribute to the [4Fe-4S] cluster site. The Radical SAM core domain occupies 164–385; that stretch reads GSSKSAATAT…KERALEMGFL (222 aa).

The protein belongs to the radical SAM superfamily. Lipoyl synthase family. The cofactor is [4Fe-4S] cluster.

It localises to the mitochondrion. It catalyses the reaction [[Fe-S] cluster scaffold protein carrying a second [4Fe-4S](2+) cluster] + N(6)-octanoyl-L-lysyl-[protein] + 2 oxidized [2Fe-2S]-[ferredoxin] + 2 S-adenosyl-L-methionine + 4 H(+) = [[Fe-S] cluster scaffold protein] + N(6)-[(R)-dihydrolipoyl]-L-lysyl-[protein] + 4 Fe(3+) + 2 hydrogen sulfide + 2 5'-deoxyadenosine + 2 L-methionine + 2 reduced [2Fe-2S]-[ferredoxin]. It functions in the pathway protein modification; protein lipoylation via endogenous pathway; protein N(6)-(lipoyl)lysine from octanoyl-[acyl-carrier-protein]: step 2/2. Its function is as follows. Catalyzes the radical-mediated insertion of two sulfur atoms into the C-6 and C-8 positions of the octanoyl moiety bound to the lipoyl domains of lipoate-dependent enzymes, thereby converting the octanoylated domains into lipoylated derivatives. The protein is Lipoyl synthase, mitochondrial of Paracoccidioides lutzii (strain ATCC MYA-826 / Pb01) (Paracoccidioides brasiliensis).